A 130-amino-acid chain; its full sequence is Protein NrdI (130 aa).

The protein belongs to the NrdI family.

Probably involved in ribonucleotide reductase function. The polypeptide is Protein NrdI (Bacillus velezensis (strain DSM 23117 / BGSC 10A6 / LMG 26770 / FZB42) (Bacillus amyloliquefaciens subsp. plantarum)).